A 130-amino-acid polypeptide reads, in one-letter code: UPF0225 protein CE1570 (130 aa).

It belongs to the UPF0225 family.

The chain is UPF0225 protein CE1570 from Corynebacterium efficiens (strain DSM 44549 / YS-314 / AJ 12310 / JCM 11189 / NBRC 100395).